A 914-amino-acid chain; its full sequence is NADH-quinone oxidoreductase subunit G (914 aa).

The region spanning 1 to 83 (MATIHVDGKE…GTFISIDDSE (83 aa)) is the 2Fe-2S ferredoxin-type domain. Positions 34, 45, 48, and 67 each coordinate [2Fe-2S] cluster. The 4Fe-4S His(Cys)3-ligated-type domain occupies 83–122 (EAKAFRESVVEWLMTNHPHDCPVCEEGGNCHLQDMTVMTG). [4Fe-4S] cluster contacts are provided by histidine 99, cysteine 103, cysteine 106, cysteine 112, cysteine 151, cysteine 154, cysteine 157, cysteine 201, cysteine 228, cysteine 231, cysteine 235, and cysteine 263. The 57-residue stretch at 221–277 (MQFAPSICQQCSVGCNTSPGERYGELRRIENRYNGSVNHYFMCDRGRFGYGYVNLKD) folds into the 4Fe-4S Mo/W bis-MGD-type domain.

The protein belongs to the complex I 75 kDa subunit family. Composed of 13 different subunits. Subunits NuoCD, E, F, and G constitute the peripheral sector of the complex. [2Fe-2S] cluster serves as cofactor. [4Fe-4S] cluster is required as a cofactor.

It carries out the reaction a quinone + NADH + 5 H(+)(in) = a quinol + NAD(+) + 4 H(+)(out). NDH-1 shuttles electrons from NADH, via FMN and iron-sulfur (Fe-S) centers, to quinones in the respiratory chain. The immediate electron acceptor for the enzyme in this species is believed to be ubiquinone. Couples the redox reaction to proton translocation (for every two electrons transferred, four hydrogen ions are translocated across the cytoplasmic membrane), and thus conserves the redox energy in a proton gradient. The polypeptide is NADH-quinone oxidoreductase subunit G (nuoG) (Yersinia pestis).